We begin with the raw amino-acid sequence, 209 residues long: Imidazole glycerol phosphate synthase subunit HisH (209 aa).

A Glutamine amidotransferase type-1 domain is found at 1 to 205; that stretch reads MIAIIDYGMG…KGVVESWKSS (205 aa). Catalysis depends on Cys-79, which acts as the Nucleophile. Active-site residues include His-180 and Glu-182.

In terms of assembly, heterodimer of HisH and HisF.

The protein resides in the cytoplasm. It carries out the reaction 5-[(5-phospho-1-deoxy-D-ribulos-1-ylimino)methylamino]-1-(5-phospho-beta-D-ribosyl)imidazole-4-carboxamide + L-glutamine = D-erythro-1-(imidazol-4-yl)glycerol 3-phosphate + 5-amino-1-(5-phospho-beta-D-ribosyl)imidazole-4-carboxamide + L-glutamate + H(+). It catalyses the reaction L-glutamine + H2O = L-glutamate + NH4(+). Its pathway is amino-acid biosynthesis; L-histidine biosynthesis; L-histidine from 5-phospho-alpha-D-ribose 1-diphosphate: step 5/9. Functionally, IGPS catalyzes the conversion of PRFAR and glutamine to IGP, AICAR and glutamate. The HisH subunit catalyzes the hydrolysis of glutamine to glutamate and ammonia as part of the synthesis of IGP and AICAR. The resulting ammonia molecule is channeled to the active site of HisF. The sequence is that of Imidazole glycerol phosphate synthase subunit HisH from Bacillus cereus (strain ATCC 10987 / NRS 248).